The primary structure comprises 294 residues: Transmembrane protein 178B (294 aa).

The N-terminal stretch at 1 to 23 (MAAGRLLLYTGLSLALCALGMLA) is a signal peptide. Residues Asn-148 and Asn-152 are each glycosylated (N-linked (GlcNAc...) asparagine). The next 3 helical transmembrane spans lie at 172 to 192 (AGFM…GVLG), 206 to 226 (LLFL…VAGI), and 252 to 272 (MFCA…CTLA).

It belongs to the TMEM178 family.

It localises to the membrane. The polypeptide is Transmembrane protein 178B (TMEM178B) (Homo sapiens (Human)).